Consider the following 937-residue polypeptide: Isoleucine--tRNA ligase (937 aa).

A 'HIGH' region motif is present at residues 58 to 68; the sequence is PYANGSIHIGH. L-isoleucyl-5'-AMP is bound at residue glutamate 561. A 'KMSKS' region motif is present at residues 602–606; that stretch reads KMSKS. Residue lysine 605 coordinates ATP. Residues cysteine 900, cysteine 903, cysteine 920, and cysteine 923 each coordinate Zn(2+).

The protein belongs to the class-I aminoacyl-tRNA synthetase family. IleS type 1 subfamily. In terms of assembly, monomer. Zn(2+) serves as cofactor.

The protein resides in the cytoplasm. It catalyses the reaction tRNA(Ile) + L-isoleucine + ATP = L-isoleucyl-tRNA(Ile) + AMP + diphosphate. In terms of biological role, catalyzes the attachment of isoleucine to tRNA(Ile). As IleRS can inadvertently accommodate and process structurally similar amino acids such as valine, to avoid such errors it has two additional distinct tRNA(Ile)-dependent editing activities. One activity is designated as 'pretransfer' editing and involves the hydrolysis of activated Val-AMP. The other activity is designated 'posttransfer' editing and involves deacylation of mischarged Val-tRNA(Ile). In Photorhabdus laumondii subsp. laumondii (strain DSM 15139 / CIP 105565 / TT01) (Photorhabdus luminescens subsp. laumondii), this protein is Isoleucine--tRNA ligase.